The following is a 335-amino-acid chain: Malate dehydrogenase (335 aa).

Residue 11–17 participates in NAD(+) binding; sequence GAAGQIG. Substrate is bound by residues arginine 94 and arginine 100. NAD(+) is bound by residues asparagine 107, glutamine 114, and 131–133; that span reads VGN. 2 residues coordinate substrate: asparagine 133 and arginine 167. The active-site Proton acceptor is the histidine 192.

This sequence belongs to the LDH/MDH superfamily. MDH type 2 family.

It carries out the reaction (S)-malate + NAD(+) = oxaloacetate + NADH + H(+). In terms of biological role, catalyzes the reversible oxidation of malate to oxaloacetate. The sequence is that of Malate dehydrogenase from Bdellovibrio bacteriovorus (strain ATCC 15356 / DSM 50701 / NCIMB 9529 / HD100).